A 502-amino-acid polypeptide reads, in one-letter code: Protein GIS3 (502 aa).

It localises to the cytoplasm. It is found in the nucleus. The polypeptide is Protein GIS3 (GIS3) (Saccharomyces cerevisiae (strain ATCC 204508 / S288c) (Baker's yeast)).